The sequence spans 446 residues: Maltoporin (446 aa).

The N-terminal stretch at 1-25 is a signal peptide; that stretch reads MMITLRKLPLAVAVAAGVMSAQAMA.

It belongs to the porin LamB (TC 1.B.3) family. In terms of assembly, homotrimer formed of three 18-stranded antiparallel beta-barrels, containing three independent channels.

Its subcellular location is the cell outer membrane. It carries out the reaction beta-maltose(in) = beta-maltose(out). Involved in the transport of maltose and maltodextrins. This chain is Maltoporin, found in Escherichia coli (strain K12 / MC4100 / BW2952).